A 314-amino-acid polypeptide reads, in one-letter code: Olfactory receptor 10T2 (314 aa).

Topologically, residues 1 to 26 are extracellular; the sequence is MRGFNKTTVVTQFILVGFSSLGELQL. A glycan (N-linked (GlcNAc...) asparagine) is linked at asparagine 5. The helical transmembrane segment at 27-47 threads the bilayer; that stretch reads LLFVIFLLLYLTILVANVTIM. Residues 48–55 lie on the Cytoplasmic side of the membrane; it reads AVIRFSWT. The helical transmembrane segment at 56–76 threads the bilayer; the sequence is LHTPMYGFLFILSFSESCYTF. Topologically, residues 77-100 are extracellular; sequence VIIPQLLVHLLSDTKTISFMACAT. Cysteine 98 and cysteine 190 are disulfide-bonded. The chain crosses the membrane as a helical span at residues 101–121; it reads QLFFFLGFACTNCLLIAVMGY. The Cytoplasmic segment spans residues 122–140; it reads DRYVAICHPLRYTLIINKR. The chain crosses the membrane as a helical span at residues 141-161; the sequence is LGLELISLSGATGFFIALVAT. The Extracellular portion of the chain corresponds to 162–198; sequence NLICDMRFCGPNRVNHYFCDMAPVIKLACTDTHVKEL. A helical transmembrane segment spans residues 199–218; that stretch reads ALFSLSILVIMVPFLLILIS. The Cytoplasmic segment spans residues 219–237; sequence YGFIVNTILKIPSAEGKKA. Residues 238–258 form a helical membrane-spanning segment; it reads FVTCASHLTVVFVHYGCASII. Residues 259–271 lie on the Extracellular side of the membrane; the sequence is YLRPKSKSASDKD. The helical transmembrane segment at 272-292 threads the bilayer; that stretch reads QLVAVTYTVVTPLLNPLVYSL. At 293–314 the chain is on the cytoplasmic side; it reads RNKEVKTALKRVLGMPVATKMS.

Belongs to the G-protein coupled receptor 1 family.

It is found in the cell membrane. Odorant receptor. The polypeptide is Olfactory receptor 10T2 (OR10T2) (Homo sapiens (Human)).